The primary structure comprises 282 residues: Pantothenate synthetase (282 aa).

30-37 (MGYLHEGH) provides a ligand contact to ATP. Residue H37 is the Proton donor of the active site. Residue Q61 participates in (R)-pantoate binding. Q61 provides a ligand contact to beta-alanine. Residue 147–150 (GMKD) coordinates ATP. Q153 lines the (R)-pantoate pocket. ATP-binding positions include V176 and 184 to 187 (KSSR).

This sequence belongs to the pantothenate synthetase family. In terms of assembly, homodimer.

The protein localises to the cytoplasm. The catalysed reaction is (R)-pantoate + beta-alanine + ATP = (R)-pantothenate + AMP + diphosphate + H(+). The protein operates within cofactor biosynthesis; (R)-pantothenate biosynthesis; (R)-pantothenate from (R)-pantoate and beta-alanine: step 1/1. Catalyzes the condensation of pantoate with beta-alanine in an ATP-dependent reaction via a pantoyl-adenylate intermediate. This chain is Pantothenate synthetase, found in Bacillus cereus (strain AH187).